We begin with the raw amino-acid sequence, 475 residues long: Ankyrin repeat, SAM and basic leucine zipper domain-containing protein 1 (475 aa).

Serine 17, serine 18, and serine 20 each carry phosphoserine. 6 ANK repeats span residues 45–74 (EKNE…SVDT), 78–107 (YGWT…NASF), 110–144 (DKQT…DPNM), 148–177 (RLMT…DVNA), 181–210 (NGYT…NKMI), and 214–243 (DGKT…PLEG). Positions 272–334 (SYTAFGDLEI…KILAALKELE (63 aa)) constitute an SAM domain.

As to quaternary structure, interacts with DDX4, PIWIL1, RANBP9 and TDRD1.

The protein resides in the cytoplasm. Functionally, plays a central role during spermatogenesis by repressing transposable elements and preventing their mobilization, which is essential for the germline integrity. Acts via the piRNA metabolic process, which mediates the repression of transposable elements during meiosis by forming complexes composed of piRNAs and Piwi proteins and governs the methylation and subsequent repression of transposons. Its association with pi-bodies suggests a participation in the primary piRNAs metabolic process. Required prior to the pachytene stage to facilitate the production of multiple types of piRNAs, including those associated with repeats involved in the regulation of retrotransposons. May act by mediating protein-protein interactions during germ cell maturation. The sequence is that of Ankyrin repeat, SAM and basic leucine zipper domain-containing protein 1 (ASZ1) from Atelerix albiventris (Middle-African hedgehog).